Here is a 22-residue protein sequence, read N- to C-terminus: 2.4 kDa venom peptide (22 aa).

In terms of processing, contains 2 disulfide bonds. Expressed by the venom gland.

Its subcellular location is the secreted. Functionally, not lethal to mice by intraperitoneal or intracerebroventricular injections in doses up to 150 micrograms. In Heterometrus spinifer (Asia giant forest scorpion), this protein is 2.4 kDa venom peptide.